A 279-amino-acid chain; its full sequence is Ribosomal RNA small subunit methyltransferase J (279 aa).

Residues 138–139 (ER) and aspartate 194 contribute to the S-adenosyl-L-methionine site.

Belongs to the methyltransferase superfamily. RsmJ family.

Its subcellular location is the cytoplasm. The enzyme catalyses guanosine(1516) in 16S rRNA + S-adenosyl-L-methionine = N(2)-methylguanosine(1516) in 16S rRNA + S-adenosyl-L-homocysteine + H(+). Functionally, specifically methylates the guanosine in position 1516 of 16S rRNA. The polypeptide is Ribosomal RNA small subunit methyltransferase J (Acinetobacter baumannii (strain ACICU)).